The primary structure comprises 165 residues: Probable velvet family sexual development regulator CC1G_12219 (165 aa).

The Velvet domain occupies 1–121 (MSNTDAQTSF…SVWGAQVNVR (121 aa)).

The protein belongs to the velvet family.

The protein resides in the nucleus. Functionally, velvet-domain-containing protein that probably acts as a positive regulator of sexual development. The sequence is that of Probable velvet family sexual development regulator CC1G_12219 from Coprinopsis cinerea (strain Okayama-7 / 130 / ATCC MYA-4618 / FGSC 9003) (Inky cap fungus).